The sequence spans 101 residues: MSTSLTKADLAEKLYEELGFNKREAKELVEHFFEEIRNSLEDNEQVKLSGFGNFDLRDKKQRPGRNPKTGEEIPITARRVVTFRPGQKLKARVEAYAGTKS.

This sequence belongs to the bacterial histone-like protein family. As to quaternary structure, heterodimer of an alpha and a beta chain.

Its function is as follows. This protein is one of the two subunits of integration host factor, a specific DNA-binding protein that functions in genetic recombination as well as in transcriptional and translational control. This is Integration host factor subunit alpha from Saccharophagus degradans (strain 2-40 / ATCC 43961 / DSM 17024).